A 666-amino-acid chain; its full sequence is 7SK snRNA methylphosphate capping enzyme (666 aa).

Methionine 1 bears the N-acetylmethionine mark. A compositionally biased stretch (basic and acidic residues) spans 1-10 (MIEMAAEKEP). A disordered region spans residues 1-141 (MIEMAAEKEP…GSGGSFKHPA (141 aa)). Positions 50 to 61 (GPGPRAHSAGAA) are enriched in low complexity. A Phosphoserine modification is found at serine 57. The residue at position 91 (arginine 91) is an Omega-N-methylarginine. 3 positions are modified to phosphoserine: serine 126, serine 150, and serine 154. Threonine 188 is subject to Phosphothreonine. Phosphoserine is present on residues serine 191, serine 192, and serine 229. Residues 235-244 (RKRHRHRGPH) show a composition bias toward basic residues. The disordered stretch occupies residues 235-291 (RKRHRHRGPHHQQQQQASGGNDSNAAVLPTDPLTPSLHGEGATQQQQNRGQNRDAPQ). Over residues 245–254 (HQQQQQASGG) the composition is skewed to low complexity. Threonine 268 carries the post-translational modification Phosphothreonine. Serine 307 and serine 321 each carry phosphoserine. Residues 309–337 (LPSALQGSSGSLSAPPAASVTSAPSTSSS) are compositionally biased toward low complexity. The tract at residues 309–383 (LPSALQGSSG…HHHPLPATGF (75 aa)) is disordered. Over residues 338–347 (SRHRKRRRTS) the composition is skewed to basic residues. Phosphoserine is present on serine 368. S-adenosyl-L-methionine-binding positions include tyrosine 399, arginine 410, 428-430 (GCN), 451-452 (DI), 536-537 (NY), and phenylalanine 558. A Bin3-type SAM domain is found at 408–663 (DVRLRVLKPE…PVYLFHKARS (256 aa)). Lysine 620 is covalently cross-linked (Glycyl lysine isopeptide (Lys-Gly) (interchain with G-Cter in SUMO2)).

This sequence belongs to the methyltransferase superfamily. Core component of the 7SK RNP complex, at least composed of 7SK RNA, LARP7, MEPCE, HEXIM1 (or HEXIM2) and P-TEFb (composed of CDK9 and CCNT1/cyclin-T1). Interacts with METTL16. Interacts with RBM7; upon genotoxic stress this interaction is enhanced, triggering the release of inactive P-TEFb complex from the core, yielding to P-TEFb complex activation. In terms of processing, dephosphorylated at Ser-126 by the PNUTS-PP1 complex, promoting RNA polymerase II transcription pause-release.

Its subcellular location is the nucleus. It catalyses the reaction a 5'-end triphospho-guanosine-ribonucleotide-snRNA + S-adenosyl-L-methionine = a 5'-end methyltriphosphate-guanosine-ribonucleotide-snRNA + S-adenosyl-L-homocysteine. S-adenosyl-L-methionine-dependent methyltransferase that adds a methylphosphate cap at the 5'-end of 7SK snRNA (7SK RNA), leading to stabilize it. Also has a non-enzymatic function as part of the 7SK RNP complex: the 7SK RNP complex sequesters the positive transcription elongation factor b (P-TEFb) in a large inactive 7SK RNP complex preventing RNA polymerase II phosphorylation and subsequent transcriptional elongation. The 7SK RNP complex also promotes snRNA gene transcription by RNA polymerase II via interaction with the little elongation complex (LEC). In the 7SK RNP complex, MEPCE is required to stabilize 7SK RNA and facilitate the assembly of 7SK RNP complex. MEPCE has a non-enzymatic function in the 7SK RNP complex; it has a non-enzymatic function; interaction with LARP7 within the 7SK RNP complex occluding its catalytic center. Also required for stability of U6 snRNAs. This Mus musculus (Mouse) protein is 7SK snRNA methylphosphate capping enzyme.